We begin with the raw amino-acid sequence, 329 residues long: uncharacterized protein (329 aa).

Positions 1 to 22 (MPLCNNFSGNLVVAVALFFAGA) are cleaved as a signal peptide.

This is an uncharacterized protein from Arabidopsis thaliana (Mouse-ear cress).